Here is a 382-residue protein sequence, read N- to C-terminus: MTDFLPFSRPSMGEEEIAAVAEVLRSGWITTGPKCQQLEQAFCQQVGCRQAIAVSSATGGMHVTLMALGIGPGDEVITPSQTWVSTVNMITLLGAEPVMVDVDRHTLMVRPQDIEAAITPKTKAIIPVHYAGAPADLTALRTLSERYGIPLIEDAAHAVGTQYRDEWIGARGTAIFSFHAIKNITCAEGGMVVTDDEALAERIRSLKFHGLGVDAFDRQRQGRKPQAEVVTPGFKYNLADINAAIALVQLDKLPAINARRQQLAARYLTQLRSLPLQPLAVPDYPHLHAWHLFMVRVDETRCGISRDGLMAALQTHGIGTGLHFRAVHTQKYYRERYPHLHLPETEWNSASLMTLPLFPDMQDSDVDRVVVALTSILESVRD.

N6-(pyridoxal phosphate)lysine is present on Lys182.

The protein belongs to the DegT/DnrJ/EryC1 family. ArnB subfamily. In terms of assembly, homodimer. Requires pyridoxal 5'-phosphate as cofactor.

It catalyses the reaction UDP-4-amino-4-deoxy-beta-L-arabinose + 2-oxoglutarate = UDP-beta-L-threo-pentopyranos-4-ulose + L-glutamate. The protein operates within nucleotide-sugar biosynthesis; UDP-4-deoxy-4-formamido-beta-L-arabinose biosynthesis; UDP-4-deoxy-4-formamido-beta-L-arabinose from UDP-alpha-D-glucuronate: step 2/3. It participates in bacterial outer membrane biogenesis; lipopolysaccharide biosynthesis. Its function is as follows. Catalyzes the conversion of UDP-4-keto-arabinose (UDP-Ara4O) to UDP-4-amino-4-deoxy-L-arabinose (UDP-L-Ara4N). The modified arabinose is attached to lipid A and is required for resistance to polymyxin and cationic antimicrobial peptides. This is UDP-4-amino-4-deoxy-L-arabinose--oxoglutarate aminotransferase from Pectobacterium carotovorum subsp. carotovorum (strain PC1).